A 72-amino-acid polypeptide reads, in one-letter code: SRY-related protein MG43 (72 aa).

Residues 1–69 (VKRPMNAFMV…KHMADYPDYK (69 aa)) constitute a DNA-binding region (HMG box).

Its subcellular location is the nucleus. The polypeptide is SRY-related protein MG43 (Tarentola mauritanica (Common wall gecko)).